A 440-amino-acid chain; its full sequence is MSEISQTVPELVAWARKNDFSISLPVDRLSFLLAVATLNGERLDGEMSEGELVDAFRHVSDAFEQTSETIGVRANNAINEMVRQRLLNRFTSEQAEGNAIYRLTPLGIGITDYYIRQREFSTLRLSMQLSIVAGELKRAADAAQEGGDEFHWHRNVYAPLKYSVAEIFDSIDLTQRIMDEQQQQVKDDIAQLLNKDWRAAISSCELLLSETSGTLRELQDTLEAAGDKLQANLLRIQDATMSHDDLHFVDRLVFDLQSKLDRIISWGQQSIDLWIGYDRHVHKFIRTAIDMDKNRVFAQRLRQSVQTYFDDPWALTYASADRLLDMRDEEMALRDDEVTGELPPDLEYEEFNEIREQLAAIIEEQLAIYKTRQTPLDLGLVVREYLAQYPRARHFDVARIVIDQAVRLGVAQADFTGLPAKWQPINDYGAKVQAHVIDKY.

The interval 208 to 236 is leucine-zipper; sequence LSETSGTLRELQDTLEAAGDKLQANLLRI.

The protein belongs to the MukF family. As to quaternary structure, interacts, and probably forms a ternary complex, with MukE and MukB via its C-terminal region. The complex formation is stimulated by calcium or magnesium. It is required for an interaction between MukE and MukB.

The protein localises to the cytoplasm. It is found in the nucleoid. Functionally, involved in chromosome condensation, segregation and cell cycle progression. May participate in facilitating chromosome segregation by condensation DNA from both sides of a centrally located replisome during cell division. Not required for mini-F plasmid partitioning. Probably acts via its interaction with MukB and MukE. Overexpression results in anucleate cells. It has a calcium binding activity. The protein is Chromosome partition protein MukF of Salmonella arizonae (strain ATCC BAA-731 / CDC346-86 / RSK2980).